Consider the following 367-residue polypeptide: Mitogen-activated protein kinase 12 (367 aa).

Positions 27-311 (YQDLQPVGSG…AAEALTHPYF (285 aa)) constitute a Protein kinase domain. ATP-binding positions include 33 to 41 (VGSGAYGAV) and Lys56. Asp153 functions as the Proton acceptor in the catalytic mechanism. Residue Thr183 is modified to Phosphothreonine. A TXY motif is present at residues 183–185 (TGY). The residue at position 185 (Tyr185) is a Phosphotyrosine.

The protein belongs to the protein kinase superfamily. CMGC Ser/Thr protein kinase family. MAP kinase subfamily. As to quaternary structure, monomer. Interacts with the PDZ domain of the syntrophin SNTA1. Interacts with SH3BP5, LIN7C, SCRIB and SYNJ2BP. Interacts with PTPN4; this interaction induces the activation of PTPN4 phosphatase activity. Mg(2+) serves as cofactor. Post-translationally, dually phosphorylated on Thr-183 and Tyr-185 by MAP2K3/MKK3 and MAP2K6/MKK6, which activates the enzyme. In terms of processing, ubiquitinated. Ubiquitination leads to degradation by the proteasome pathway. In terms of tissue distribution, highly expressed in skeletal muscle. Also expressed in the heart, particularly in cardiac myocytes, lung, thymus and testes.

It localises to the cytoplasm. It is found in the nucleus. The protein localises to the mitochondrion. The catalysed reaction is L-seryl-[protein] + ATP = O-phospho-L-seryl-[protein] + ADP + H(+). It catalyses the reaction L-threonyl-[protein] + ATP = O-phospho-L-threonyl-[protein] + ADP + H(+). Activated by phosphorylation on threonine and tyrosine. MAP2K3/MKK3 and MAP2K6/MKK6 are both essential for the activation of MAPK12 induced by environmental stress, whereas MAP2K6/MKK6 is the major MAPK12 activator in response to TNF-alpha. Its function is as follows. Serine/threonine kinase which acts as an essential component of the MAP kinase signal transduction pathway. MAPK12 is one of the four p38 MAPKs which play an important role in the cascades of cellular responses evoked by extracellular stimuli such as pro-inflammatory cytokines or physical stress leading to direct activation of transcription factors such as ELK1 and ATF2. Accordingly, p38 MAPKs phosphorylate a broad range of proteins and it has been estimated that they may have approximately 200 to 300 substrates each. Some of the targets are downstream kinases such as MAPKAPK2, which are activated through phosphorylation and further phosphorylate additional targets. Plays a role in myoblast differentiation and also in the down-regulation of cyclin D1 in response to hypoxia in adrenal cells suggesting MAPK12 may inhibit cell proliferation while promoting differentiation. Phosphorylates DLG1. Following osmotic shock, MAPK12 in the cell nucleus increases its association with nuclear DLG1, thereby causing dissociation of DLG1-SFPQ complexes. This function is independent of its catalytic activity and could affect mRNA processing and/or gene transcription to aid cell adaptation to osmolarity changes in the environment. Regulates UV-induced checkpoint signaling and repair of UV-induced DNA damage and G2 arrest after gamma-radiation exposure. MAPK12 is involved in the regulation of SLC2A1 expression and basal glucose uptake in L6 myotubes; and negatively regulates SLC2A4 expression and contraction-mediated glucose uptake in adult skeletal muscle. C-Jun (JUN) phosphorylation is stimulated by MAPK14 and inhibited by MAPK12, leading to a distinct AP-1 regulation. MAPK12 is required for the normal kinetochore localization of PLK1, prevents chromosomal instability and supports mitotic cell viability. MAPK12-signaling is also positively regulating the expansion of transient amplifying myogenic precursor cells during muscle growth and regeneration. The chain is Mitogen-activated protein kinase 12 (Mapk12) from Mus musculus (Mouse).